Here is a 661-residue protein sequence, read N- to C-terminus: Translation factor GUF1 homolog, mitochondrial (661 aa).

The 184-residue stretch at 59–242 folds into the tr-type G domain; sequence ENIRNFCIVA…AIIDRIPSPK (184 aa). GTP contacts are provided by residues 68 to 75, 135 to 139, and 189 to 192; these read AHVDHGKS, DTPGH, and NKVD.

It belongs to the TRAFAC class translation factor GTPase superfamily. Classic translation factor GTPase family. LepA subfamily.

It localises to the mitochondrion inner membrane. It carries out the reaction GTP + H2O = GDP + phosphate + H(+). In terms of biological role, promotes mitochondrial protein synthesis. May act as a fidelity factor of the translation reaction, by catalyzing a one-codon backward translocation of tRNAs on improperly translocated ribosomes. Binds to mitochondrial ribosomes in a GTP-dependent manner. The protein is Translation factor GUF1 homolog, mitochondrial of Ixodes scapularis (Black-legged tick).